Reading from the N-terminus, the 216-residue chain is Adenylate kinase (216 aa).

ATP is bound at residue 10–15 (GAGKGT). Positions 30–59 (STGDIFRANIKEKTPLGIEAKRYIDNGQLV) are NMP. AMP-binding positions include Thr-31, Arg-36, 57–59 (QLV), 85–88 (GFPR), and Gln-92. The tract at residues 126 to 163 (GRRVCTSCGASYHIRFNPPKIEGKCDICDNELIQRKDD) is LID. Position 127 (Arg-127) interacts with ATP. 2 residues coordinate Zn(2+): Cys-130 and Cys-133. 136–137 (SY) contributes to the ATP binding site. Positions 150 and 153 each coordinate Zn(2+). Arg-160 and Arg-171 together coordinate AMP. Glu-199 contributes to the ATP binding site.

Belongs to the adenylate kinase family. As to quaternary structure, monomer.

Its subcellular location is the cytoplasm. The enzyme catalyses AMP + ATP = 2 ADP. It functions in the pathway purine metabolism; AMP biosynthesis via salvage pathway; AMP from ADP: step 1/1. Catalyzes the reversible transfer of the terminal phosphate group between ATP and AMP. Plays an important role in cellular energy homeostasis and in adenine nucleotide metabolism. This Clostridium botulinum (strain ATCC 19397 / Type A) protein is Adenylate kinase.